We begin with the raw amino-acid sequence, 59 residues long: UPF0181 protein YoaH (59 aa).

This sequence belongs to the UPF0181 family.

The polypeptide is UPF0181 protein YoaH (Shigella flexneri serotype 5b (strain 8401)).